The following is a 221-amino-acid chain: Interleukin-12 subunit alpha (221 aa).

An N-terminal signal peptide occupies residues 1–25 (MCPLRSLLLISTLVLLHHLPHLSLG). 3 disulfide bridges follow: Cys-39-Cys-112, Cys-66-Cys-198, and Cys-87-Cys-125. N-linked (GlcNAc...) asparagine glycosylation is present at Asn-95.

Belongs to the IL-6 superfamily. Heterodimer with IL12B; disulfide-linked. This heterodimer is known as interleukin IL-12. Heterodimer with EBI3/IL27B; not disulfide-linked. This heterodimer is known as interleukin IL-35. Interacts with NBR1; this interaction promotes IL-12 secretion.

The protein localises to the secreted. Functionally, heterodimerizes with IL12B to form the IL-12 cytokine or with EBI3/IL27B to form the IL-35 cytokine. IL-12 is primarily produced by professional antigen-presenting cells (APCs) such as B-cells and dendritic cells (DCs) as well as macrophages and granulocytes and regulates T-cell and natural killer-cell responses, induces the production of interferon-gamma (IFN-gamma), favors the differentiation of T-helper 1 (Th1) cells and is an important link between innate resistance and adaptive immunity. Mechanistically, exerts its biological effects through a receptor composed of IL12R1 and IL12R2 subunits. Binding to the receptor results in the rapid tyrosine phosphorylation of a number of cellular substrates including the JAK family kinases TYK2 and JAK2. In turn, recruited STAT4 gets phosphorylated and translocates to the nucleus where it regulates cytokine/growth factor responsive genes. As part of IL-35, plays essential roles in maintaining the immune homeostasis of the liver microenvironment and also functions as an immune-suppressive cytokine. Mediates biological events through unconventional receptors composed of IL12RB2 and gp130/IL6ST heterodimers or homodimers. Signaling requires the transcription factors STAT1 and STAT4, which form a unique heterodimer that binds to distinct DNA sites. In Capra hircus (Goat), this protein is Interleukin-12 subunit alpha (IL12A).